The following is an 846-amino-acid chain: Iron-sulfur cluster assembly SufBD family protein Mb1496 (846 aa).

Residues 1–20 (MTLTPEASKSVAQPPTQAPL) are disordered. The region spanning 388 to 528 (LAGYYLAEGH…LQSILARLGH (141 aa)) is the DOD-type homing endonuclease domain.

Belongs to the iron-sulfur cluster assembly SufBD family. In terms of processing, this protein undergoes a protein self splicing that involves a post-translational excision of the intervening region (intein) followed by peptide ligation.

The sequence is that of Iron-sulfur cluster assembly SufBD family protein Mb1496 from Mycobacterium bovis (strain ATCC BAA-935 / AF2122/97).